We begin with the raw amino-acid sequence, 221 residues long: MTDYDDYEDRSGVVEEELLDFDRAMLDFQAMFPSLSNSHIEYVLRKYDGDVSATINELLYDNTPTTTTSESIPHGGDLTKLRQRRHEINEKLRENQKFLDTVTDVEIARAYEDQQLALLLEHREVNTLISEEKKKKSCSDSSSIQESRRHVKIPGKNSKNSKISVNKAKKLEPRRRSDEDRVPDGPYIGEGEVKSENFAAKIKETLRKASGSRISRLFSAP.

Residues 20-63 (DFDRAMLDFQAMFPSLSNSHIEYVLRKYDGDVSATINELLYDNT) form the CUE domain. Residues 131–194 (EEKKKKSCSD…GPYIGEGEVK (64 aa)) are disordered. Positions 156 to 166 (KNSKNSKISVN) are enriched in low complexity. Basic and acidic residues predominate over residues 169–183 (KKLEPRRRSDEDRVP).

This is an uncharacterized protein from Caenorhabditis elegans.